Here is a 173-residue protein sequence, read N- to C-terminus: NADH-quinone oxidoreductase subunit B 1 (173 aa).

Residues Cys-42, Cys-43, Cys-107, and Cys-137 each contribute to the [4Fe-4S] cluster site.

It belongs to the complex I 20 kDa subunit family. As to quaternary structure, NDH-1 is composed of 14 different subunits. Subunits NuoB, C, D, E, F, and G constitute the peripheral sector of the complex. Requires [4Fe-4S] cluster as cofactor.

The protein resides in the cell inner membrane. It carries out the reaction a quinone + NADH + 5 H(+)(in) = a quinol + NAD(+) + 4 H(+)(out). NDH-1 shuttles electrons from NADH, via FMN and iron-sulfur (Fe-S) centers, to quinones in the respiratory chain. The immediate electron acceptor for the enzyme in this species is believed to be ubiquinone. Couples the redox reaction to proton translocation (for every two electrons transferred, four hydrogen ions are translocated across the cytoplasmic membrane), and thus conserves the redox energy in a proton gradient. The chain is NADH-quinone oxidoreductase subunit B 1 from Anaeromyxobacter sp. (strain K).